Reading from the N-terminus, the 151-residue chain is MQVILKEKVENLGVLGDIVNVKPGYARNFLIPFGKAVQATQANIKAFEAQKAELEKAEKARFEAAVAVADAIKDKVYTIAAQAGEGGKLFGSVGTAEVAEAVSNQSGKKVEKSQVRMPEGVIRSVGEFEFTVHVYTDVDADIKVNVVAAEA.

Belongs to the bacterial ribosomal protein bL9 family.

Binds to the 23S rRNA. The protein is Large ribosomal subunit protein bL9 of Francisella tularensis subsp. novicida (strain U112).